The following is a 968-amino-acid chain: Glycine dehydrogenase (decarboxylating) (968 aa).

Lys712 carries the post-translational modification N6-(pyridoxal phosphate)lysine.

The protein belongs to the GcvP family. As to quaternary structure, the glycine cleavage system is composed of four proteins: P, T, L and H. Requires pyridoxal 5'-phosphate as cofactor.

It carries out the reaction N(6)-[(R)-lipoyl]-L-lysyl-[glycine-cleavage complex H protein] + glycine + H(+) = N(6)-[(R)-S(8)-aminomethyldihydrolipoyl]-L-lysyl-[glycine-cleavage complex H protein] + CO2. In terms of biological role, the glycine cleavage system catalyzes the degradation of glycine. The P protein binds the alpha-amino group of glycine through its pyridoxal phosphate cofactor; CO(2) is released and the remaining methylamine moiety is then transferred to the lipoamide cofactor of the H protein. The polypeptide is Glycine dehydrogenase (decarboxylating) (Prochlorococcus marinus (strain NATL2A)).